The chain runs to 57 residues: Small ribosomal subunit protein bS21B (57 aa).

Residues 37-57 are disordered; that stretch reads RYEKPSARRKRKAEAARKRRR. A compositionally biased stretch (basic residues) spans 43–57; sequence ARRKRKAEAARKRRR.

It belongs to the bacterial ribosomal protein bS21 family.

The polypeptide is Small ribosomal subunit protein bS21B (Gloeobacter violaceus (strain ATCC 29082 / PCC 7421)).